We begin with the raw amino-acid sequence, 474 residues long: Aspartyl/glutamyl-tRNA(Asn/Gln) amidotransferase subunit B (474 aa).

The protein belongs to the GatB/GatE family. GatB subfamily. Heterotrimer of A, B and C subunits.

It carries out the reaction L-glutamyl-tRNA(Gln) + L-glutamine + ATP + H2O = L-glutaminyl-tRNA(Gln) + L-glutamate + ADP + phosphate + H(+). The enzyme catalyses L-aspartyl-tRNA(Asn) + L-glutamine + ATP + H2O = L-asparaginyl-tRNA(Asn) + L-glutamate + ADP + phosphate + 2 H(+). Allows the formation of correctly charged Asn-tRNA(Asn) or Gln-tRNA(Gln) through the transamidation of misacylated Asp-tRNA(Asn) or Glu-tRNA(Gln) in organisms which lack either or both of asparaginyl-tRNA or glutaminyl-tRNA synthetases. The reaction takes place in the presence of glutamine and ATP through an activated phospho-Asp-tRNA(Asn) or phospho-Glu-tRNA(Gln). The protein is Aspartyl/glutamyl-tRNA(Asn/Gln) amidotransferase subunit B of Desulfotalea psychrophila (strain LSv54 / DSM 12343).